A 431-amino-acid chain; its full sequence is MSLKKALDDCMIDFDRCVLVTDLLEEYKLSYKEVNDVLEAYIKEQEPATKFEKRFLVHGKRKTQGSDSGEDLYSVVLESRMQDWLAKVQDAESQLYSVKIAGGTKAPAAIFKPMQHLEVKLAKVEQRPGAGKIVPSANGTTPHNGVKSEPTKSEPSKSAVKLEPSKSSLKSEPAKSKAEKPVASKSSPEDKKTSPKEQASKAKPAAAKKGSINSFFTAAASKPKDVKATPSKSTSGTVDNFFKKQPAGAKKSPPESEDKSKKDASNSNKKEASKKKSPSPTKKPTTANTSMQLFDEESAESSDEEEKLDMLRRKVIESDNDSDQEKASSSKRRRISDSEDEEQPPKKSADEETIALDEKMDTEPANETYLDEDGFVITQRKPTKAQPANKKVSPKAAAPVNKKKSPPSAAKAGKDAPKTKQAGIMNFFSKK.

A necessary for function, possibly resulting from its inability to interact with PolD2 region spans residues 64–80; sequence QGSDSGEDLYSVVLESR. Positions 128–431 are disordered; sequence PGAGKIVPSA…AGIMNFFSKK (304 aa). Residues 156 to 171 show a composition bias toward low complexity; sequence SKSAVKLEPSKSSLKS. 2 stretches are compositionally biased toward basic and acidic residues: residues 172 to 200 and 252 to 271; these read EPAK…EQAS and SPPE…NKKE. Residues 278 to 290 show a composition bias toward low complexity; it reads PSPTKKPTTANTS. A compositionally biased stretch (acidic residues) spans 294-307; that stretch reads FDEESAESSDEEEK. Basic and acidic residues-rich tracts occupy residues 308–328 and 343–362; these read LDML…EKAS and QPPK…KMDT. Over residues 387-411 the composition is skewed to low complexity; it reads PANKKVSPKAAAPVNKKKSPPSAAK.

In terms of assembly, component of both the DNA polymerase delta and DNA polymerase zeta complexes. The DNA polymerase delta complex consists of three subunits: the catalytic subunit PolD1 and two accessory subunits PolD2/Pol31 and PolD3/Pol32. Within the delta complex, interacts with both PolD1 and PolD2. Component of the DNA polymerase zeta complex consisting of four subunits: the catalytic subunit PolZ1 and three accessory subunits PolZ2/Rev7, PolD2/Pol31 and PolD3/Pol32. In terms of tissue distribution, expressed in ovaries (at the protein level). Expressed in ovaries.

The protein localises to the nucleus. It is found in the nucleoplasm. Accessory component of the DNA polymerase delta complex and possibly the DNA polymerase zeta complex. As a component of the delta complex, participates in high fidelity genome replication, including lagging strand synthesis, DNA recombination and repair. Required to recruit the DNA polymerase delta complex to the nucleus of rapidly dividing embryonic cells, and as a consequence is essential for genome replication during the earliest cell cycles. Increases the efficiency and processivity of DNA synthesis of the DNA polymerases during mitotic DNA replication and repair. During development this function is essential for preventing replication stress that results in the formation of chromosomal fragile sites (CFS) such as chromosomal breaks. Ensures genomic stability by promoting several types of DNA repair mechanisms including repairing broken dicentric chromosomes through homolog-dependent break-induced replication (BIR). During homologous recombination (HR) repair, required for maintaining the processivity of the delta complex during break-induced replication; a form of HR that requires extensive DNA synthesis such as the repair of large gaps. Able to suppress position effect variegation and may therefore have a role in the induction of chromatin state changes that likely include its activities in DNA replication and repair. This chain is DNA polymerase delta subunit 3, found in Drosophila melanogaster (Fruit fly).